A 569-amino-acid polypeptide reads, in one-letter code: Acyl-CoA-binding domain-containing protein 5 (569 aa).

The signal sequence occupies residues 1–31; it reads MELFYELLLTAAASLLVAFLLARLLASAATA. The ACB domain maps to 415-506; the sequence is IEKRFGVAAA…LSEAIPGWMG (92 aa). Residues Lys-474 and Tyr-493 each contribute to the an acyl-CoA site. N-linked (GlcNAc...) asparagine glycosylation occurs at Asn-508. 2 stretches are compositionally biased toward polar residues: residues 533 to 544 and 552 to 569; these read INQHDSQGNEDN and LTSSPNPEKGQSSDIPAE. Residues 533–569 form a disordered region; that stretch reads INQHDSQGNEDNTGMYEGHLTSSPNPEKGQSSDIPAE.

Belongs to the ACBP family. Highly expressed in seeds and leaves. Expressed at low levels in roots.

Its subcellular location is the endoplasmic reticulum. In terms of biological role, binds medium- and long-chain acyl-CoA esters with high affinity. Can interact in vitro with palmitoyl-CoA and linolenoyl-CoA. Binds phosphatidic acid (PA) and phosphatidylcholine (PC) in vitro. May play a role in the biosynthesis of phospholipids. The polypeptide is Acyl-CoA-binding domain-containing protein 5 (Oryza sativa subsp. japonica (Rice)).